The primary structure comprises 156 residues: ATP synthase subunit b (156 aa).

Residues 5–25 (VTLIGQTVAFIIFVWFCMKFV) traverse the membrane as a helical segment.

This sequence belongs to the ATPase B chain family. In terms of assembly, F-type ATPases have 2 components, F(1) - the catalytic core - and F(0) - the membrane proton channel. F(1) has five subunits: alpha(3), beta(3), gamma(1), delta(1), epsilon(1). F(0) has three main subunits: a(1), b(2) and c(10-14). The alpha and beta chains form an alternating ring which encloses part of the gamma chain. F(1) is attached to F(0) by a central stalk formed by the gamma and epsilon chains, while a peripheral stalk is formed by the delta and b chains.

It localises to the cell inner membrane. In terms of biological role, f(1)F(0) ATP synthase produces ATP from ADP in the presence of a proton or sodium gradient. F-type ATPases consist of two structural domains, F(1) containing the extramembraneous catalytic core and F(0) containing the membrane proton channel, linked together by a central stalk and a peripheral stalk. During catalysis, ATP synthesis in the catalytic domain of F(1) is coupled via a rotary mechanism of the central stalk subunits to proton translocation. Its function is as follows. Component of the F(0) channel, it forms part of the peripheral stalk, linking F(1) to F(0). The protein is ATP synthase subunit b of Shewanella loihica (strain ATCC BAA-1088 / PV-4).